A 120-amino-acid chain; its full sequence is MSIELRTKYGQIDISNEVIAMVAGGAAVDCYGIVGMASKNQIKDGLTEILRKENFSRGVQVRQEGEQIHIDMYIIVSYGTKISEVAHNVQTKVKYTVNQTIGLAVDSVNIYVQGVRVTNP.

It belongs to the asp23 family.

This is an uncharacterized protein from Bacillus subtilis (strain 168).